The following is a 205-amino-acid chain: uncharacterized protein (205 aa).

The segment at 1–42 (MSRKRDKPYTNRHTPARISKRRRPWAPSSSEHDEIIDKPITK) is disordered. The segment covering 14–24 (TPARISKRRRP) has biased composition (basic residues). The span at 30 to 40 (SEHDEIIDKPI) shows a compositional bias: basic and acidic residues. The RRM domain maps to 47-122 (PALVVMGLPA…KKLEVVWATD (76 aa)). The disordered stretch occupies residues 170–191 (PRSDNTKGISGDGGISSPATTS).

This is an uncharacterized protein from Arabidopsis thaliana (Mouse-ear cress).